The chain runs to 75 residues: uncharacterized protein (75 aa).

Residues Met-1–Ala-19 form the signal peptide. Residue Cys-20 is the site of N-palmitoyl cysteine attachment. Cys-20 is lipidated: S-diacylglycerol cysteine.

To E.coli YgdR.

It is found in the cell membrane. This is an uncharacterized protein from Escherichia coli O6:H1 (strain CFT073 / ATCC 700928 / UPEC).